Here is a 115-residue protein sequence, read N- to C-terminus: Large ribosomal subunit protein uL24 (115 aa).

This sequence belongs to the universal ribosomal protein uL24 family. Part of the 50S ribosomal subunit.

In terms of biological role, one of two assembly initiator proteins, it binds directly to the 5'-end of the 23S rRNA, where it nucleates assembly of the 50S subunit. Functionally, one of the proteins that surrounds the polypeptide exit tunnel on the outside of the subunit. This Amoebophilus asiaticus (strain 5a2) protein is Large ribosomal subunit protein uL24.